The following is a 240-amino-acid chain: Methylthioribulose-1-phosphate dehydratase (240 aa).

Substrate is bound at residue C99. H116 and H118 together coordinate Zn(2+). The active-site Proton donor/acceptor is the E145. Position 201 (H201) interacts with Zn(2+).

Belongs to the aldolase class II family. MtnB subfamily. Zn(2+) serves as cofactor.

The protein localises to the cytoplasm. It carries out the reaction 5-(methylsulfanyl)-D-ribulose 1-phosphate = 5-methylsulfanyl-2,3-dioxopentyl phosphate + H2O. Its pathway is amino-acid biosynthesis; L-methionine biosynthesis via salvage pathway; L-methionine from S-methyl-5-thio-alpha-D-ribose 1-phosphate: step 2/6. In terms of biological role, catalyzes the dehydration of methylthioribulose-1-phosphate (MTRu-1-P) into 2,3-diketo-5-methylthiopentyl-1-phosphate (DK-MTP-1-P). The chain is Methylthioribulose-1-phosphate dehydratase from Paracoccidioides brasiliensis (strain Pb18).